Consider the following 816-residue polypeptide: Leucine--tRNA ligase (816 aa).

The 'HIGH' region signature appears at 40–51 (PYPSGSGLHVGH). Positions 576–580 (KMSKS) match the 'KMSKS' region motif. Lysine 579 lines the ATP pocket.

Belongs to the class-I aminoacyl-tRNA synthetase family.

The protein resides in the cytoplasm. The catalysed reaction is tRNA(Leu) + L-leucine + ATP = L-leucyl-tRNA(Leu) + AMP + diphosphate. The sequence is that of Leucine--tRNA ligase from Chlorobium phaeobacteroides (strain DSM 266 / SMG 266 / 2430).